The chain runs to 81 residues: Relaxin-like protein AGF (81 aa).

Disulfide bonds link Cys14/Cys66, Cys26/Cys79, and Cys65/Cys70. A glycan (N-linked (GlcNAc...) asparagine) is linked at Asn37.

It belongs to the insulin family. In terms of assembly, heterodimer of a B chain and an A chain linked by two disulfide bonds.

It localises to the secreted. Uncertain. This Hypanus sabinus (Atlantic stingray) protein is Relaxin-like protein AGF.